A 288-amino-acid polypeptide reads, in one-letter code: Pyridoxal kinase PdxY (288 aa).

Substrate is bound by residues Ser9 and 44–45 (TQ). ATP-binding residues include Asp111, Glu148, and Lys181. Asp224 provides a ligand contact to substrate.

The protein belongs to the pyridoxine kinase family. PdxY subfamily. As to quaternary structure, homodimer. Requires Mg(2+) as cofactor.

The catalysed reaction is pyridoxal + ATP = pyridoxal 5'-phosphate + ADP + H(+). Its pathway is cofactor metabolism; pyridoxal 5'-phosphate salvage; pyridoxal 5'-phosphate from pyridoxal: step 1/1. Its function is as follows. Pyridoxal kinase involved in the salvage pathway of pyridoxal 5'-phosphate (PLP). Catalyzes the phosphorylation of pyridoxal to PLP. This is Pyridoxal kinase PdxY from Haemophilus influenzae (strain PittEE).